Reading from the N-terminus, the 544-residue chain is Chaperonin GroEL (544 aa).

Residues 30 to 33 (TLGP), Lys51, 87 to 91 (DGTTT), Gly415, 479 to 481 (NAA), and Asp495 each bind ATP.

Belongs to the chaperonin (HSP60) family. Forms a cylinder of 14 subunits composed of two heptameric rings stacked back-to-back. Interacts with the co-chaperonin GroES.

Its subcellular location is the cytoplasm. The enzyme catalyses ATP + H2O + a folded polypeptide = ADP + phosphate + an unfolded polypeptide.. Functionally, together with its co-chaperonin GroES, plays an essential role in assisting protein folding. The GroEL-GroES system forms a nano-cage that allows encapsulation of the non-native substrate proteins and provides a physical environment optimized to promote and accelerate protein folding. This chain is Chaperonin GroEL, found in Acinetobacter baumannii (strain AB307-0294).